The primary structure comprises 882 residues: DNA mismatch repair protein MutS (882 aa).

Positions 1-22 are disordered; it reads MTLPSDFPLEPPATNKDPHRDY. Residue 662 to 669 participates in ATP binding; sequence GPNASGKS.

It belongs to the DNA mismatch repair MutS family.

Functionally, this protein is involved in the repair of mismatches in DNA. It is possible that it carries out the mismatch recognition step. This protein has a weak ATPase activity. The chain is DNA mismatch repair protein MutS from Microcystis aeruginosa (strain NIES-843 / IAM M-2473).